The following is a 572-amino-acid chain: Golgi apyrase (572 aa).

At 1–470 (MVRKYGIFID…KHWMRLFPNK (470 aa)) the chain is on the lumenal side. E145 serves as the catalytic Proton acceptor. The helical transmembrane segment at 471–491 (LFFILSFIFCLFFLFSLVLFG) threads the bilayer. Over 492 to 572 (YDPKRRQRFK…RERTPRSPFP (81 aa)) the chain is Cytoplasmic.

It belongs to the GDA1/CD39 NTPase family. The cofactor is Ca(2+). Mg(2+) serves as cofactor. Mn(2+) is required as a cofactor.

The protein localises to the golgi apparatus. It localises to the membrane. It catalyses the reaction a ribonucleoside 5'-triphosphate + 2 H2O = a ribonucleoside 5'-phosphate + 2 phosphate + 2 H(+). It functions in the pathway protein modification; protein glycosylation. Functionally, catalyzes the hydrolysis of phosphoanhydride bonds of nucleoside tri- and di-phosphates. Required for Golgi glycosylation and cell wall integrity. Involved in N-mannosylation of proteins in Golgi. This chain is Golgi apyrase, found in Schizosaccharomyces pombe (strain 972 / ATCC 24843) (Fission yeast).